The following is a 655-amino-acid chain: p-hydroxybenzoic acid efflux pump subunit AaeB (655 aa).

Over 1-12 (MGIFSIANQHIR) the chain is Periplasmic. The chain crosses the membrane as a helical span at residues 13 to 33 (FAVKLATAIVLALFVGFHFQL). At 34–37 (ETPR) the chain is on the cytoplasmic side. The helical transmembrane segment at 38 to 58 (WAVLTAAIVAAGTAFAAGGEP) threads the bilayer. Over 59 to 68 (YSGAIRYRGF) the chain is Periplasmic. Residues 69-89 (LRIIGTFIGCIAGLVIIIAMI) form a helical membrane-spanning segment. The Cytoplasmic portion of the chain corresponds to 90-92 (RAP). A helical transmembrane segment spans residues 93-113 (LLMILVCCIWAGFCTWISSLV). The Periplasmic portion of the chain corresponds to 114 to 120 (RIENSYA). The helical transmembrane segment at 121–141 (WGLAGYTALIIVITIQPEPLL) threads the bilayer. The Cytoplasmic segment spans residues 142 to 151 (TPQFAVERCS). A helical transmembrane segment spans residues 152–172 (EIVIGIVCAIMADLLFSPRSI). Over 173 to 369 (KQEVDRELES…RTTLSCILGT (197 aa)) the chain is Periplasmic. Residues 370–390 (LFWLWTGWTSGSGAMVMIAVV) form a helical membrane-spanning segment. Over 391–406 (TSLAMRLPNPRMVAID) the chain is Cytoplasmic. Residues 407–427 (FIYGTLAALPLGLLYFLVIIP) form a helical membrane-spanning segment. Residues 428-430 (NTQ) are Periplasmic-facing. Residues 431 to 451 (QSMLLLCISLAVLGFFLGIEV) form a helical membrane-spanning segment. The Cytoplasmic segment spans residues 452 to 458 (QKRRLGS). The helical transmembrane segment at 459–479 (MGALASTINIIVLDNPMTFHF) threads the bilayer. The Periplasmic segment spans residues 480 to 481 (SQ). A helical transmembrane segment spans residues 482–502 (FLDSALGQIVGCVLAFTVILL). At 503–655 (VRDKSRDRTG…HKYQHALTDS (153 aa)) the chain is on the cytoplasmic side.

The protein belongs to the aromatic acid exporter ArAE (TC 2.A.85) family.

It is found in the cell inner membrane. Forms an efflux pump with AaeA. Could function as a metabolic relief valve, allowing to eliminate certain compounds when they accumulate to high levels in the cell. Substrates are p-hydroxybenzoic acid (pHBA), 6-hydroxy-2-naphthoic and 2-hydroxycinnamate. The polypeptide is p-hydroxybenzoic acid efflux pump subunit AaeB (Escherichia coli (strain K12)).